We begin with the raw amino-acid sequence, 273 residues long: NADPH-dependent 7-cyano-7-deazaguanine reductase (273 aa).

80–82 contacts substrate; that stretch reads VES. NADPH is bound at residue 82 to 83; the sequence is SK. Cys180 (thioimide intermediate) is an active-site residue. The Proton donor role is filled by Asp187. 219–220 is a binding site for substrate; sequence HE. 248-249 provides a ligand contact to NADPH; the sequence is RG.

It belongs to the GTP cyclohydrolase I family. QueF type 2 subfamily. As to quaternary structure, homodimer.

Its subcellular location is the cytoplasm. It carries out the reaction 7-aminomethyl-7-carbaguanine + 2 NADP(+) = 7-cyano-7-deazaguanine + 2 NADPH + 3 H(+). Its pathway is tRNA modification; tRNA-queuosine biosynthesis. Catalyzes the NADPH-dependent reduction of 7-cyano-7-deazaguanine (preQ0) to 7-aminomethyl-7-deazaguanine (preQ1). In Bordetella parapertussis (strain 12822 / ATCC BAA-587 / NCTC 13253), this protein is NADPH-dependent 7-cyano-7-deazaguanine reductase.